Reading from the N-terminus, the 444-residue chain is Docking protein 3 (444 aa).

The region spanning proline 7 to phenylalanine 123 is the PH domain. Residues aspartate 47–arginine 66 form a disordered region. Serine 138 carries the post-translational modification Phosphoserine. The region spanning glutamate 157–leucine 261 is the IRS-type PTB domain. 3 positions are modified to phosphoserine: serine 274, serine 308, and serine 314. A Phosphotyrosine modification is found at tyrosine 325. The interval glycine 354 to alanine 390 is disordered. Residues glycine 358 to proline 376 are compositionally biased toward low complexity. The residue at position 371 (serine 371) is a Phosphoserine.

Belongs to the DOK family. Type A subfamily. As to quaternary structure, on tyrosine phosphorylation, interacts with CSK and INPP5D/SHIP1 via their SH2 domains. Binds ABL1 through the PTB domain and in a kinase-dependent manner. Does not interact with RasGAP. In terms of processing, constitutively tyrosine-phosphorylated. On IL2 stimulation, phosphorylated on C-terminal tyrosine residues possibly by Src kinases. Can also be phosphorylated by ABL1 kinase.

It is found in the cytoplasm. The protein resides in the cell membrane. DOK proteins are enzymatically inert adaptor or scaffolding proteins. They provide a docking platform for the assembly of multimolecular signaling complexes. DOK3 is a negative regulator of JNK signaling in B-cells through interaction with INPP5D/SHIP1. May modulate ABL1 function. The chain is Docking protein 3 (Dok3) from Rattus norvegicus (Rat).